Consider the following 147-residue polypeptide: MMNILLINGPNLNLLGTREPEIYGNKTLIDIEKDLTKVAKEKSINIECFQSNHEGEIVDKIHDSVKSIQGILINAGAFTHTSISIRDALIGSKIPFVELHISNIFSREDFRKESFLTDKAIGIISGFGISSYFLALEGIIGYLNGKN.

Tyr23 functions as the Proton acceptor in the catalytic mechanism. Residues Asn74, His80, and Asp87 each contribute to the substrate site. His100 functions as the Proton donor in the catalytic mechanism. Residues 101–102 and Arg111 contribute to the substrate site; that span reads IS.

The protein belongs to the type-II 3-dehydroquinase family. In terms of assembly, homododecamer.

The enzyme catalyses 3-dehydroquinate = 3-dehydroshikimate + H2O. Its pathway is metabolic intermediate biosynthesis; chorismate biosynthesis; chorismate from D-erythrose 4-phosphate and phosphoenolpyruvate: step 3/7. In terms of biological role, catalyzes a trans-dehydration via an enolate intermediate. The chain is 3-dehydroquinate dehydratase from Prochlorococcus marinus (strain MIT 9215).